We begin with the raw amino-acid sequence, 313 residues long: Porphobilinogen deaminase (313 aa).

An S-(dipyrrolylmethanemethyl)cysteine modification is found at cysteine 242.

Belongs to the HMBS family. Monomer. The cofactor is dipyrromethane.

The enzyme catalyses 4 porphobilinogen + H2O = hydroxymethylbilane + 4 NH4(+). The protein operates within porphyrin-containing compound metabolism; protoporphyrin-IX biosynthesis; coproporphyrinogen-III from 5-aminolevulinate: step 2/4. Functionally, tetrapolymerization of the monopyrrole PBG into the hydroxymethylbilane pre-uroporphyrinogen in several discrete steps. The protein is Porphobilinogen deaminase of Photorhabdus laumondii subsp. laumondii (strain DSM 15139 / CIP 105565 / TT01) (Photorhabdus luminescens subsp. laumondii).